The primary structure comprises 410 residues: Divergent protein kinase domain 1C (410 aa).

The Cytoplasmic portion of the chain corresponds to Met-1–Arg-19. The short motif at Arg-18–Arg-19 is the May mediate ER retention element. The chain crosses the membrane as a helical span at residues Gly-20–Leu-40. The Lumenal segment spans residues Arg-41–Lys-410.

The protein belongs to the DIPK family. In terms of processing, among the many cysteines in the lumenal domain, most are probably involved in disulfide bonds. In terms of tissue distribution, mainly expressed in the brain and eye, some expression in kidney and skeletal muscle.

It is found in the endoplasmic reticulum membrane. This is Divergent protein kinase domain 1C (Dipk1c) from Mus musculus (Mouse).